A 289-amino-acid chain; its full sequence is ATP synthase subunit a (289 aa).

6 consecutive transmembrane segments (helical) span residues 43–63, 101–121, 160–180, 193–213, 232–252, and 259–279; these read AFHV…VLIF, SAVI…MNAV, LSVF…GGFI, LFVQ…TLIA, VFIL…GLGV, and AVFH…LTIV.

Belongs to the ATPase A chain family. As to quaternary structure, F-type ATPases have 2 components, CF(1) - the catalytic core - and CF(0) - the membrane proton channel. CF(1) has five subunits: alpha(3), beta(3), gamma(1), delta(1), epsilon(1). CF(0) has three main subunits: a(1), b(2) and c(9-12). The alpha and beta chains form an alternating ring which encloses part of the gamma chain. CF(1) is attached to CF(0) by a central stalk formed by the gamma and epsilon chains, while a peripheral stalk is formed by the delta and b chains.

The protein resides in the cell inner membrane. Functionally, key component of the proton channel; it plays a direct role in the translocation of protons across the membrane. This is ATP synthase subunit a from Pseudomonas savastanoi pv. phaseolicola (strain 1448A / Race 6) (Pseudomonas syringae pv. phaseolicola (strain 1448A / Race 6)).